Here is a 102-residue protein sequence, read N- to C-terminus: Phosphoribosyl-ATP pyrophosphatase (102 aa).

Belongs to the PRA-PH family.

It is found in the cytoplasm. It catalyses the reaction 1-(5-phospho-beta-D-ribosyl)-ATP + H2O = 1-(5-phospho-beta-D-ribosyl)-5'-AMP + diphosphate + H(+). It participates in amino-acid biosynthesis; L-histidine biosynthesis; L-histidine from 5-phospho-alpha-D-ribose 1-diphosphate: step 2/9. The chain is Phosphoribosyl-ATP pyrophosphatase from Jannaschia sp. (strain CCS1).